A 146-amino-acid chain; its full sequence is Catabolic 3-dehydroquinase (146 aa).

The active-site Proton acceptor is tyrosine 24. Residues asparagine 78, histidine 84, and aspartate 91 each contribute to the substrate site. The active-site Proton donor is histidine 104. Residues 105–106 and arginine 115 contribute to the substrate site; that span reads IT.

It belongs to the type-II 3-dehydroquinase family. As to quaternary structure, homododecamer. Adopts a ring-like structure, composed of an arrangement of two hexameric rings stacked on top of one another.

It carries out the reaction 3-dehydroquinate = 3-dehydroshikimate + H2O. It participates in aromatic compound metabolism; 3,4-dihydroxybenzoate biosynthesis; 3,4-dihydroxybenzoate from 3-dehydroquinate: step 1/2. Is involved in the catabolism of quinate. Allows the utilization of quinate as carbon source via the beta-ketoadipate pathway. The sequence is that of Catabolic 3-dehydroquinase from Candida albicans (strain SC5314 / ATCC MYA-2876) (Yeast).